A 546-amino-acid polypeptide reads, in one-letter code: Probable protein kinase UbiB (546 aa).

A Protein kinase domain is found at Asp-124–Leu-502. ATP contacts are provided by residues Leu-130 to Val-138 and Lys-153. The active-site Proton acceptor is Asp-288. 2 helical membrane passes run Tyr-501 to Pro-521 and Glu-522 to Trp-542.

It belongs to the ABC1 family. UbiB subfamily.

The protein localises to the cell inner membrane. It functions in the pathway cofactor biosynthesis; ubiquinone biosynthesis [regulation]. In terms of biological role, is probably a protein kinase regulator of UbiI activity which is involved in aerobic coenzyme Q (ubiquinone) biosynthesis. The polypeptide is Probable protein kinase UbiB (Salmonella agona (strain SL483)).